The chain runs to 440 residues: MSAPKKLYIKTYGCQMNVYDSERMAETLGGQGYVETQTPDDADMILLNTCHIREKAAEKVYSELGRFKGLKAEKPDLKIGVAGCVAQAEGEEIMRRQPLVDLVVGPQSYHRLPEMEAKAGTGEKVLDTDFPEEDKFEKLKRRPKAKRGPTAFLTVQEGCDKFCAFCVVPYTRGAEVSRPVDRVLREAEDLVERGVREITLLGQNVNAYHGAGPNGDMTLAQLIWELDKIDGLERIRFTTSHPNDMMDDLIEAHGTCKKLMPYLHLPVQAGSDKILKRMNRSHTAESYIRLIERIRAARPDILISGDFIVGFPEETEEDFQATLDLVEEVKYGTAYSFKYSTRPGTPAAERAQVDPKEADDRLQRLQAVLTRQQREVQDSMVGRELGVLFEKAGRFAGQMVGKSDYLHAVHVADCDAKIGDLRRVRIVSSGANSLAGELID.

In terms of domain architecture, MTTase N-terminal spans 5 to 121 (KKLYIKTYGC…LPEMEAKAGT (117 aa)). Positions 14, 50, 84, 159, 163, and 166 each coordinate [4Fe-4S] cluster. A Radical SAM core domain is found at 145–378 (AKRGPTAFLT…LTRQQREVQD (234 aa)). Residues 378–440 (DSMVGRELGV…ANSLAGELID (63 aa)) enclose the TRAM domain.

The protein belongs to the methylthiotransferase family. MiaB subfamily. In terms of assembly, monomer. [4Fe-4S] cluster serves as cofactor.

The protein resides in the cytoplasm. The catalysed reaction is N(6)-dimethylallyladenosine(37) in tRNA + (sulfur carrier)-SH + AH2 + 2 S-adenosyl-L-methionine = 2-methylsulfanyl-N(6)-dimethylallyladenosine(37) in tRNA + (sulfur carrier)-H + 5'-deoxyadenosine + L-methionine + A + S-adenosyl-L-homocysteine + 2 H(+). Catalyzes the methylthiolation of N6-(dimethylallyl)adenosine (i(6)A), leading to the formation of 2-methylthio-N6-(dimethylallyl)adenosine (ms(2)i(6)A) at position 37 in tRNAs that read codons beginning with uridine. This is tRNA-2-methylthio-N(6)-dimethylallyladenosine synthase from Ruegeria sp. (strain TM1040) (Silicibacter sp.).